We begin with the raw amino-acid sequence, 122 residues long: Big defensin (122 aa).

The N-terminal stretch at 1–28 (MTRPSLVRCYSLFFTALIVMAIICPAWS) is a signal peptide. The propeptide occupies 29–34 (EEIPKS). 3 disulfide bridges follow: cysteine 88/cysteine 119, cysteine 95/cysteine 114, and cysteine 99/cysteine 120.

This sequence belongs to the big defensin family. As to expression, expressed in hemocytes.

The protein localises to the secreted. Functionally, significantly inhibits the growth of Gram-negative and Gram-positive bacteria and fungi in vitro. The chain is Big defensin from Argopecten irradians (Bay scallop).